Reading from the N-terminus, the 339-residue chain is Glycerol-3-phosphate dehydrogenase [NAD(P)+] (339 aa).

4 residues coordinate NADPH: S15, Y16, H36, and K110. Sn-glycerol 3-phosphate contacts are provided by K110, G139, and T141. A143 lines the NADPH pocket. Residues K195, D248, S258, R259, and N260 each contribute to the sn-glycerol 3-phosphate site. Residue K195 is the Proton acceptor of the active site. Position 259 (R259) interacts with NADPH. V283 and E285 together coordinate NADPH.

This sequence belongs to the NAD-dependent glycerol-3-phosphate dehydrogenase family.

The protein resides in the cytoplasm. The catalysed reaction is sn-glycerol 3-phosphate + NAD(+) = dihydroxyacetone phosphate + NADH + H(+). It carries out the reaction sn-glycerol 3-phosphate + NADP(+) = dihydroxyacetone phosphate + NADPH + H(+). Its pathway is membrane lipid metabolism; glycerophospholipid metabolism. Catalyzes the reduction of the glycolytic intermediate dihydroxyacetone phosphate (DHAP) to sn-glycerol 3-phosphate (G3P), the key precursor for phospholipid synthesis. This is Glycerol-3-phosphate dehydrogenase [NAD(P)+] from Escherichia coli O17:K52:H18 (strain UMN026 / ExPEC).